We begin with the raw amino-acid sequence, 360 residues long: Phospho-N-acetylmuramoyl-pentapeptide-transferase (360 aa).

Helical transmembrane passes span 26–46 (AIMSVLTALILSLWMGPRLIA), 70–90 (GTPTMGGIMILAAITITALLW), 94–114 (SNPYIWAVLAVMLGYGVVGFV), 132–152 (WKYFWQSVIALVIAFALYMHG), 168–188 (VMPQLGLLYIVLTYFVIVGTS), 199–219 (GLAIMPTVMVAGGMAFIAWAT), 239–259 (LVVLCTAIVGAGLGFLWFNTY), 263–283 (VFMGDVGSLALGGALGTIAVL), 288–308 (LLLVIMGGVFVMETVSVILQV), and 338–358 (VIVRFWIITLMLVLIALATLK).

Belongs to the glycosyltransferase 4 family. MraY subfamily. Mg(2+) is required as a cofactor.

The protein resides in the cell inner membrane. It carries out the reaction UDP-N-acetyl-alpha-D-muramoyl-L-alanyl-gamma-D-glutamyl-meso-2,6-diaminopimeloyl-D-alanyl-D-alanine + di-trans,octa-cis-undecaprenyl phosphate = di-trans,octa-cis-undecaprenyl diphospho-N-acetyl-alpha-D-muramoyl-L-alanyl-D-glutamyl-meso-2,6-diaminopimeloyl-D-alanyl-D-alanine + UMP. The protein operates within cell wall biogenesis; peptidoglycan biosynthesis. Catalyzes the initial step of the lipid cycle reactions in the biosynthesis of the cell wall peptidoglycan: transfers peptidoglycan precursor phospho-MurNAc-pentapeptide from UDP-MurNAc-pentapeptide onto the lipid carrier undecaprenyl phosphate, yielding undecaprenyl-pyrophosphoryl-MurNAc-pentapeptide, known as lipid I. This Photobacterium profundum (strain SS9) protein is Phospho-N-acetylmuramoyl-pentapeptide-transferase.